The primary structure comprises 351 residues: N(4)-bis(aminopropyl)spermidine synthase (351 aa).

Belongs to the branched-chain polyamine synthase family.

The protein resides in the cytoplasm. It carries out the reaction 2 S-adenosyl 3-(methylsulfanyl)propylamine + spermidine = N(4)-bis(aminopropyl)spermidine + 2 S-methyl-5'-thioadenosine + 2 H(+). It participates in amine and polyamine biosynthesis. In terms of biological role, involved in the biosynthesis of branched-chain polyamines, which support the growth of thermophiles under high-temperature conditions. Catalyzes the sequential condensation of spermidine with the aminopropyl groups of decarboxylated S-adenosylmethionines to produce N(4)-bis(aminopropyl)spermidine via N(4)-aminopropylspermidine. Can also use spermine to produce N(4)-aminopropylspermine. This Thermococcus kodakarensis (strain ATCC BAA-918 / JCM 12380 / KOD1) (Pyrococcus kodakaraensis (strain KOD1)) protein is N(4)-bis(aminopropyl)spermidine synthase.